The sequence spans 529 residues: Bifunctional purine biosynthesis protein PurH (529 aa).

An MGS-like domain is found at 1–148 (MQQRRPVRRA…KNHKDVAIVV (148 aa)).

This sequence belongs to the PurH family.

It carries out the reaction (6R)-10-formyltetrahydrofolate + 5-amino-1-(5-phospho-beta-D-ribosyl)imidazole-4-carboxamide = 5-formamido-1-(5-phospho-D-ribosyl)imidazole-4-carboxamide + (6S)-5,6,7,8-tetrahydrofolate. The enzyme catalyses IMP + H2O = 5-formamido-1-(5-phospho-D-ribosyl)imidazole-4-carboxamide. Its pathway is purine metabolism; IMP biosynthesis via de novo pathway; 5-formamido-1-(5-phospho-D-ribosyl)imidazole-4-carboxamide from 5-amino-1-(5-phospho-D-ribosyl)imidazole-4-carboxamide (10-formyl THF route): step 1/1. It participates in purine metabolism; IMP biosynthesis via de novo pathway; IMP from 5-formamido-1-(5-phospho-D-ribosyl)imidazole-4-carboxamide: step 1/1. The chain is Bifunctional purine biosynthesis protein PurH from Salmonella agona (strain SL483).